The primary structure comprises 239 residues: Putative 3-methyladenine DNA glycosylase (239 aa).

The protein belongs to the DNA glycosylase MPG family.

The sequence is that of Putative 3-methyladenine DNA glycosylase from Pseudomonas aeruginosa (strain LESB58).